The chain runs to 131 residues: Small ribosomal subunit protein uS8 (131 aa).

This sequence belongs to the universal ribosomal protein uS8 family. Part of the 30S ribosomal subunit. Contacts proteins S5 and S12.

One of the primary rRNA binding proteins, it binds directly to 16S rRNA central domain where it helps coordinate assembly of the platform of the 30S subunit. This is Small ribosomal subunit protein uS8 from Pelodictyon phaeoclathratiforme (strain DSM 5477 / BU-1).